Here is a 144-residue protein sequence, read N- to C-terminus: MQLNNLKPADGSKHAKRRVGRGIGSGLGKTAGRGHKGQKSRSGGFHKVGFEGGQMPLYRRLPKRGFTSLTKAFTAEVTLRDIERLEAAEVDLLVLKQAGLVGELVKSAKVIKAGELSRKVTIKGLGATAGAKAAIEAAGGQIEA.

Residues 1–48 (MQLNNLKPADGSKHAKRRVGRGIGSGLGKTAGRGHKGQKSRSGGFHKV) form a disordered region. The segment covering 21-31 (RGIGSGLGKTA) has biased composition (gly residues).

Belongs to the universal ribosomal protein uL15 family. As to quaternary structure, part of the 50S ribosomal subunit.

In terms of biological role, binds to the 23S rRNA. This chain is Large ribosomal subunit protein uL15, found in Cupriavidus metallidurans (strain ATCC 43123 / DSM 2839 / NBRC 102507 / CH34) (Ralstonia metallidurans).